The following is a 393-amino-acid chain: MSQISSNLLRNTVQNGKFGCLKNSIQCKHTAANPLEKIRERLESGPSFQDFVQNPSYNRDDWTDYEGKLRREKGENDRLRLPPWLKTKIPMGKNFSRIKDQLRELKLATVCEEAKCPNIGECWGGGEHGTQTATIMLMGDTCTRGCRFCSVKTARVPPPLDPAEPTNTASAIASWGLDYIVLTSVDRDDLPDGGSNHIAATIREIKRQNPRIFVECLAPDFRGDLECVKVVAQSGLDVYAHNIETVEALTPFVRDRRARYRQSLDVLRSIKEINPSMITKTSIMLGLGETDEQIEQTMKDLRSVGVDCLTLGQYMQPTKRHLKVIEYVTPEKFKHWETRGNELGFLYTASGPLVRSSYKAGEFFITSILKNRAEEAERRKEAAGGQDTKTEQT.

The [4Fe-4S] cluster site is built by C111, C116, C122, C142, C146, C149, and S357. The 220-residue stretch at 127 to 346 folds into the Radical SAM core domain; the sequence is EHGTQTATIM…ETRGNELGFL (220 aa).

The protein belongs to the radical SAM superfamily. Lipoyl synthase family. Requires [4Fe-4S] cluster as cofactor.

It is found in the mitochondrion. The enzyme catalyses [[Fe-S] cluster scaffold protein carrying a second [4Fe-4S](2+) cluster] + N(6)-octanoyl-L-lysyl-[protein] + 2 oxidized [2Fe-2S]-[ferredoxin] + 2 S-adenosyl-L-methionine + 4 H(+) = [[Fe-S] cluster scaffold protein] + N(6)-[(R)-dihydrolipoyl]-L-lysyl-[protein] + 4 Fe(3+) + 2 hydrogen sulfide + 2 5'-deoxyadenosine + 2 L-methionine + 2 reduced [2Fe-2S]-[ferredoxin]. Its pathway is protein modification; protein lipoylation via endogenous pathway; protein N(6)-(lipoyl)lysine from octanoyl-[acyl-carrier-protein]: step 2/2. Its function is as follows. Catalyzes the radical-mediated insertion of two sulfur atoms into the C-6 and C-8 positions of the octanoyl moiety bound to the lipoyl domains of lipoate-dependent enzymes, thereby converting the octanoylated domains into lipoylated derivatives. This Aedes aegypti (Yellowfever mosquito) protein is Lipoyl synthase, mitochondrial.